A 160-amino-acid chain; its full sequence is MSVIKKPDLTDPKLRAKLAKGMGHNYYGEPAWPNDLLYVFPLTMLGTLTCIVGLSVLAPTQLGEPADPFNTPLEILPEWYFFPTFNLLRVLPNKLLGVLAMAAVPLGLITVPFIENVNKFQNPFRRPLASLTFIFGFFTAVWLGIGACVPIDKAISLGFW.

Helical transmembrane passes span 36–56 (LLYVFPLTMLGTLTCIVGLSV), 95–115 (LLGVLAMAAVPLGLITVPFIE), and 131–151 (LTFIFGFFTAVWLGIGACVPI).

Belongs to the cytochrome b family. PetD subfamily. The 4 large subunits of the cytochrome b6-f complex are cytochrome b6, subunit IV (17 kDa polypeptide, petD), cytochrome f and the Rieske protein, while the 4 small subunits are petG, petL, petM and petN. The complex functions as a dimer.

The protein resides in the plastid. It localises to the chloroplast thylakoid membrane. Component of the cytochrome b6-f complex, which mediates electron transfer between photosystem II (PSII) and photosystem I (PSI), cyclic electron flow around PSI, and state transitions. The protein is Cytochrome b6-f complex subunit 4 of Phaeodactylum tricornutum (strain CCAP 1055/1).